A 437-amino-acid chain; its full sequence is Homogentisate 1,2-dioxygenase (437 aa).

Residues 15–34 are disordered; the sequence is NEHATSDPRVPDALPVGQNS. Fe cation contacts are provided by histidine 336, glutamate 342, and histidine 372.

It belongs to the homogentisate dioxygenase family. Requires Fe cation as cofactor. As to expression, expressed in the hypodermis and intestine.

It carries out the reaction homogentisate + O2 = 4-maleylacetoacetate + H(+). It functions in the pathway amino-acid degradation; L-phenylalanine degradation; acetoacetate and fumarate from L-phenylalanine: step 4/6. Plays a role in the tyrosine degradation pathway. This is Homogentisate 1,2-dioxygenase from Caenorhabditis elegans.